The primary structure comprises 190 residues: NAD(P)H-quinone oxidoreductase subunit I (190 aa).

4Fe-4S ferredoxin-type domains follow at residues 55-84 (GRIHFEFDKCIACEVCVRVCPINLPVVDWT) and 95-124 (KHYSIDFGVCIFCGNCVEYCPTNCLSMTEE). [4Fe-4S] cluster contacts are provided by Cys-64, Cys-67, Cys-70, Cys-74, Cys-104, Cys-107, Cys-110, and Cys-114. The segment at 169 to 190 (IEPHDLPAGSQRAGKRPEEITD) is disordered.

It belongs to the complex I 23 kDa subunit family. In terms of assembly, NDH-1 is composed of at least 11 different subunits. The cofactor is [4Fe-4S] cluster.

It is found in the cellular thylakoid membrane. It carries out the reaction a plastoquinone + NADH + (n+1) H(+)(in) = a plastoquinol + NAD(+) + n H(+)(out). It catalyses the reaction a plastoquinone + NADPH + (n+1) H(+)(in) = a plastoquinol + NADP(+) + n H(+)(out). Its function is as follows. NDH-1 shuttles electrons from an unknown electron donor, via FMN and iron-sulfur (Fe-S) centers, to quinones in the respiratory and/or the photosynthetic chain. The immediate electron acceptor for the enzyme in this species is believed to be plastoquinone. Couples the redox reaction to proton translocation, and thus conserves the redox energy in a proton gradient. This Microcystis aeruginosa (strain NIES-843 / IAM M-2473) protein is NAD(P)H-quinone oxidoreductase subunit I.